Reading from the N-terminus, the 441-residue chain is Homogentisate 1,2-dioxygenase (441 aa).

His287 (proton acceptor) is an active-site residue. Fe cation-binding residues include His330 and Glu336. Residues Tyr345 and His366 each contribute to the homogentisate site. Fe cation is bound at residue His366.

This sequence belongs to the homogentisate dioxygenase family. As to quaternary structure, hexamer; dimer of trimers. Fe cation serves as cofactor.

It catalyses the reaction homogentisate + O2 = 4-maleylacetoacetate + H(+). The protein operates within amino-acid degradation; L-phenylalanine degradation; acetoacetate and fumarate from L-phenylalanine: step 4/6. Its function is as follows. Involved in the catabolism of homogentisate (2,5-dihydroxyphenylacetate or 2,5-OH-PhAc), a central intermediate in the degradation of phenylalanine and tyrosine. Catalyzes the oxidative ring cleavage of the aromatic ring of homogentisate to yield maleylacetoacetate. The polypeptide is Homogentisate 1,2-dioxygenase (Xanthomonas oryzae pv. oryzae (strain MAFF 311018)).